The following is a 37-amino-acid chain: Diuretic hormone 1 (37 aa).

It belongs to the sauvagine/corticotropin-releasing factor/urotensin I family.

Its subcellular location is the secreted. Functionally, stimulates fluid secretion by the Malpighian tubules. Increases cyclic AMP production. In Tenebrio molitor (Yellow mealworm beetle), this protein is Diuretic hormone 1.